A 248-amino-acid chain; its full sequence is Probable transcriptional regulatory protein PHZ_c3068 (248 aa).

This sequence belongs to the TACO1 family.

The protein resides in the cytoplasm. The polypeptide is Probable transcriptional regulatory protein PHZ_c3068 (Phenylobacterium zucineum (strain HLK1)).